The following is a 353-amino-acid chain: Guanine nucleotide-binding protein subunit alpha (353 aa).

The segment at 1 to 26 (MGCGMSTEEKEGKARNEEIENQLKRD) is disordered. Gly-2 is lipidated: N-myristoyl glycine. Cys-3 carries the S-palmitoyl cysteine lipid modification. Residues 7 to 26 (TEEKEGKARNEEIENQLKRD) show a composition bias toward basic and acidic residues. A G-alpha domain is found at 32–353 (NEIKMLLLGA…QENLRLCGLI (322 aa)). The tract at residues 35 to 48 (KMLLLGAGESGKST) is G1 motif. GTP is bound by residues Glu-43, Ser-44, Gly-45, Lys-46, Ser-47, Thr-48, Asp-150, Leu-175, Thr-181, Gly-203, Asn-269, Lys-270, Asp-272, and Ala-325. Ser-47 is a Mg(2+) binding site. A G2 motif region spans residues 173–181 (DVLRSRVKT). Residue Thr-181 participates in Mg(2+) binding. The interval 196 to 205 (YRMFDVGGQR) is G3 motif. Residues 265–272 (ILFLNKID) form a G4 motif region. The tract at residues 323 to 328 (TCATDT) is G5 motif.

Belongs to the G-alpha family. G(q) subfamily. In terms of assembly, g proteins are composed of 3 units; alpha, beta and gamma. The alpha chain contains the guanine nucleotide binding site. Requires Mg(2+) as cofactor.

In terms of biological role, guanine nucleotide-binding proteins (G proteins) are involved as modulators or transducers in various transmembrane signaling systems. This chain is Guanine nucleotide-binding protein subunit alpha, found in Cryphonectria parasitica (Chestnut blight fungus).